An 806-amino-acid polypeptide reads, in one-letter code: N-terminal kinase-like protein (806 aa).

Residues 14–314 form the Protein kinase domain; it reads FELSPEPPEG…PEDFCRHKVL (301 aa). HEAT repeat units follow at residues 350 to 388, 389 to 427, and 507 to 545; these read IIPVVVKMFSSTDRAMRIRLLQQMEQFIQYLDEPTVNTQ, IFPHVTHGFLDTNPAIREQTVKSMLLLAPKLNEANLNVE, and ILPVLCGLTVDPEKSVRDQAFKTIRSFLSKLESVSEDPT. Disordered regions lie at residues 586–642 and 663–806; these read RAHP…TADR and DDWS…RKLD. The span at 601–611 shows a compositional bias: pro residues; it reads RPVPEGNPAPA. Position 752 is a phosphoserine (Ser-752). The segment covering 752-762 has biased composition (acidic residues); the sequence is SWGEDNWEGLE. Residues 755–795 are a coiled coil; the sequence is EDNWEGLEAESRQVKAELARKKREERRREMEAKRAEKKTTK. 2 stretches are compositionally biased toward basic and acidic residues: residues 763-773 and 780-793; these read AESRQVKAELA and RRREMEAKRAEKKT. Positions 791–806 are interaction with COPB1; it reads KKTTKGPMKLGARKLD.

This sequence belongs to the protein kinase superfamily. Homooligomer. Interacts with GORAB. Interacts with COPA, COPB1 and COPB2. Interacts with AP2B1. Expressed in diaphragm, quadriceps, thymus, liver, lung, spleen, kidney, heart and brain. Prominently expressed in neurons, and enriched at central nervous system synapses and neuromuscular junctions.

Its subcellular location is the cytoplasm. It localises to the cytoskeleton. The protein localises to the microtubule organizing center. It is found in the centrosome. The protein resides in the endoplasmic reticulum-Golgi intermediate compartment. Its subcellular location is the golgi apparatus. It localises to the cis-Golgi network. In terms of biological role, regulates COPI-mediated retrograde protein traffic at the interface between the Golgi apparatus and the endoplasmic reticulum. Involved in the maintenance of the Golgi apparatus morphology. The sequence is that of N-terminal kinase-like protein (Scyl1) from Mus musculus (Mouse).